Reading from the N-terminus, the 363-residue chain is Phosphoserine aminotransferase (363 aa).

Residue Arg42 coordinates L-glutamate. Residues 76 to 77 (GR), Trp102, Thr156, Asp175, and Gln198 each bind pyridoxal 5'-phosphate. At Lys199 the chain carries N6-(pyridoxal phosphate)lysine. Residue 240–241 (NT) participates in pyridoxal 5'-phosphate binding.

The protein belongs to the class-V pyridoxal-phosphate-dependent aminotransferase family. SerC subfamily. Homodimer. Requires pyridoxal 5'-phosphate as cofactor.

Its subcellular location is the cytoplasm. It catalyses the reaction O-phospho-L-serine + 2-oxoglutarate = 3-phosphooxypyruvate + L-glutamate. The catalysed reaction is 4-(phosphooxy)-L-threonine + 2-oxoglutarate = (R)-3-hydroxy-2-oxo-4-phosphooxybutanoate + L-glutamate. Its pathway is amino-acid biosynthesis; L-serine biosynthesis; L-serine from 3-phospho-D-glycerate: step 2/3. It participates in cofactor biosynthesis; pyridoxine 5'-phosphate biosynthesis; pyridoxine 5'-phosphate from D-erythrose 4-phosphate: step 3/5. In terms of biological role, catalyzes the reversible conversion of 3-phosphohydroxypyruvate to phosphoserine and of 3-hydroxy-2-oxo-4-phosphonooxybutanoate to phosphohydroxythreonine. The chain is Phosphoserine aminotransferase from Shewanella baltica (strain OS185).